The following is a 250-amino-acid chain: 5-oxoprolinase subunit A (250 aa).

This sequence belongs to the LamB/PxpA family. In terms of assembly, forms a complex composed of PxpA, PxpB and PxpC.

It catalyses the reaction 5-oxo-L-proline + ATP + 2 H2O = L-glutamate + ADP + phosphate + H(+). Functionally, catalyzes the cleavage of 5-oxoproline to form L-glutamate coupled to the hydrolysis of ATP to ADP and inorganic phosphate. The protein is 5-oxoprolinase subunit A of Streptomyces griseus subsp. griseus (strain JCM 4626 / CBS 651.72 / NBRC 13350 / KCC S-0626 / ISP 5235).